A 99-amino-acid polypeptide reads, in one-letter code: Large ribosomal subunit protein uL23 (99 aa).

This sequence belongs to the universal ribosomal protein uL23 family. Part of the 50S ribosomal subunit. Contacts protein L29, and trigger factor when it is bound to the ribosome.

In terms of biological role, one of the early assembly proteins it binds 23S rRNA. One of the proteins that surrounds the polypeptide exit tunnel on the outside of the ribosome. Forms the main docking site for trigger factor binding to the ribosome. The protein is Large ribosomal subunit protein uL23 of Pseudomonas aeruginosa (strain LESB58).